Here is a 134-residue protein sequence, read N- to C-terminus: UPF0756 membrane protein YeaL (134 aa).

The next 4 membrane-spanning stretches (helical) occupy residues 14–34 (ALGF…LIIV), 51–71 (LTVG…SGTL), 86–106 (LVAI…ITLM), and 110–130 (PQLV…FRGV).

This sequence belongs to the UPF0756 family.

Its subcellular location is the cell membrane. The protein is UPF0756 membrane protein YeaL of Salmonella typhimurium (strain LT2 / SGSC1412 / ATCC 700720).